The following is a 401-amino-acid chain: Protein zntC (401 aa).

Helical transmembrane passes span 33–53 (GGLIAGIFVLTLTASFVPWFL), 61–81 (LVSVVSILTCLSAGVIIGAGF), and 114–134 (ITIVTMFALICVDKILVSGGL). The disordered stretch occupies residues 141 to 247 (NHMDLSQHNH…SHKDEKDSEK (107 aa)). The span at 167–184 (GDDDDDDVNEDQEEDSTK) shows a compositional bias: acidic residues. Low complexity predominate over residues 200-209 (HNSSNSSSNG). Residues 212–225 (HGLKKKKKSKKEHG) show a composition bias toward basic residues. Residues 226-247 (HGHNHDHSSNGHSHKDEKDSEK) show a composition bias toward basic and acidic residues. A run of 5 helical transmembrane segments spans residues 256-276 (AWVFLVALSLHSIFDGLGLGS), 285-305 (GLLIAVLAHKFLDGLVLGIAI), 316-336 (CIALVFAAAMTPLGIGIGMAI), 351-371 (GIILSITCGSFIYISLIELLP), and 381-401 (KLKLAVAFLGYSVMAILALWV).

It belongs to the ZIP transporter (TC 2.A.5) family.

It is found in the membrane. May transport divalent cations. May participate, with dstA, in the regulation of the differentiation of stalk cells during development. The chain is Protein zntC (zntC) from Dictyostelium discoideum (Social amoeba).